A 761-amino-acid polypeptide reads, in one-letter code: Ribonucleoside-diphosphate reductase subunit alpha (761 aa).

In terms of domain architecture, ATP-cone spans 5-95 (LFVTKRDGRK…IFHLRKKAYG (91 aa)). ATP is bound by residues Lys-9, 15–21 (EKINLDK), Thr-55, and Lys-91. Residue Thr-209 coordinates GDP. Cysteines 225 and 462 form a disulfide. Residues 232–234 (DSL), Arg-262, and Arg-269 contribute to the dTTP site. Asn-437 provides a ligand contact to GDP. The active-site Proton acceptor is the Asn-437. Cys-439 (cysteine radical intermediate) is an active-site residue. Residues Glu-441 and 623 to 625 (ETS) contribute to the GDP site. Glu-441 (proton acceptor) is an active-site residue.

This sequence belongs to the ribonucleoside diphosphate reductase large chain family. As to quaternary structure, tetramer of two alpha and two beta subunits.

It catalyses the reaction a 2'-deoxyribonucleoside 5'-diphosphate + [thioredoxin]-disulfide + H2O = a ribonucleoside 5'-diphosphate + [thioredoxin]-dithiol. Its activity is regulated as follows. Under complex allosteric control mediated by deoxynucleoside triphosphates and ATP binding to separate specificity and activation sites on the alpha subunit. The type of nucleotide bound at the specificity site determines substrate preference. It seems probable that ATP makes the enzyme reduce CDP and UDP, dGTP favors ADP reduction and dTTP favors GDP reduction. Stimulated by ATP and inhibited by dATP binding to the activity site. In terms of biological role, provides the precursors necessary for DNA synthesis. Catalyzes the biosynthesis of deoxyribonucleotides from the corresponding ribonucleotides. In Buchnera aphidicola subsp. Acyrthosiphon pisum (strain APS) (Acyrthosiphon pisum symbiotic bacterium), this protein is Ribonucleoside-diphosphate reductase subunit alpha (nrdA).